Reading from the N-terminus, the 406-residue chain is Tyrosine--tRNA ligase (406 aa).

Residue Y35 coordinates L-tyrosine. The 'HIGH' region signature appears at 40-49; that stretch reads ATSASLHIGH. L-tyrosine-binding residues include Y167 and Q171. The 'KMSKS' region motif lies at 227 to 231; the sequence is KMGKS. K230 serves as a coordination point for ATP. Residues 341 to 405 form the S4 RNA-binding domain; that stretch reads ILLVDLMVLA…IGKKKILRIV (65 aa).

The protein belongs to the class-I aminoacyl-tRNA synthetase family. TyrS type 1 subfamily. Homodimer.

Its subcellular location is the cytoplasm. The enzyme catalyses tRNA(Tyr) + L-tyrosine + ATP = L-tyrosyl-tRNA(Tyr) + AMP + diphosphate + H(+). In terms of biological role, catalyzes the attachment of tyrosine to tRNA(Tyr) in a two-step reaction: tyrosine is first activated by ATP to form Tyr-AMP and then transferred to the acceptor end of tRNA(Tyr). In Borrelia recurrentis (strain A1), this protein is Tyrosine--tRNA ligase.